A 394-amino-acid chain; its full sequence is Na(+)/H(+) antiporter NhaA (394 aa).

The next 11 helical transmembrane spans lie at 14–34, 59–79, 95–115, 125–145, 154–174, 179–199, 213–233, 254–274, 292–312, 328–348, and 363–383; these read AGGLILIIAAAIALLMANSAL, LLLWINDGLMAVFFLMIGLEV, VFPAIAALGGMLAPALIYLLF, GWAIPAATDIAFALGVMALLG, VFLLALAIIDDLGVIIIIALF, VSLQSLGIAAAAIALLAYMNW, LVLWVCILKSGVHATLAGVIV, GLHPWVAYLILPLFAFANAGV, IATGLFIGKPLGIFTFSWLAV, IFAVSVLCGIGFTMSIFIASL, and LGILLGSTTAAVVGYSLLRLV.

Belongs to the NhaA Na(+)/H(+) (TC 2.A.33) antiporter family.

It is found in the cell inner membrane. It carries out the reaction Na(+)(in) + 2 H(+)(out) = Na(+)(out) + 2 H(+)(in). Na(+)/H(+) antiporter that extrudes sodium in exchange for external protons. This chain is Na(+)/H(+) antiporter NhaA, found in Yersinia pestis bv. Antiqua (strain Angola).